Reading from the N-terminus, the 212-residue chain is Deoxyribose-phosphate aldolase (212 aa).

The active-site Proton donor/acceptor is the Asp-89. Lys-151 (schiff-base intermediate with acetaldehyde) is an active-site residue. Residue Lys-180 is the Proton donor/acceptor of the active site.

The protein belongs to the DeoC/FbaB aldolase family. DeoC type 1 subfamily.

It localises to the cytoplasm. It carries out the reaction 2-deoxy-D-ribose 5-phosphate = D-glyceraldehyde 3-phosphate + acetaldehyde. It functions in the pathway carbohydrate degradation; 2-deoxy-D-ribose 1-phosphate degradation; D-glyceraldehyde 3-phosphate and acetaldehyde from 2-deoxy-alpha-D-ribose 1-phosphate: step 2/2. Catalyzes a reversible aldol reaction between acetaldehyde and D-glyceraldehyde 3-phosphate to generate 2-deoxy-D-ribose 5-phosphate. In Clostridium botulinum (strain Loch Maree / Type A3), this protein is Deoxyribose-phosphate aldolase.